Here is a 324-residue protein sequence, read N- to C-terminus: Short-chain dehydrogenase/reductase iacJ (324 aa).

Residues Ile42, Lys66, Asp93, Asn120, Tyr204, Lys208, and Thr239 each coordinate NADP(+). Tyr204 (proton donor) is an active-site residue. The active-site Lowers pKa of active site Tyr is the Lys208.

Belongs to the short-chain dehydrogenases/reductases (SDR) family.

Its pathway is secondary metabolite biosynthesis. Its function is as follows. Short-chain dehydrogenase/reductase; part of the gene cluster that mediates the biosynthesis of iso-A82775C, a enylepoxycyclohexane and biosynthetic precursor of the chloropestolide anticancer natural products. Within the cluster, the prenyltransferase iacE prenylates siccayne to generate pestalodiol E, using dimethylallyl diphosphate (DMAPP) as cosubstrate. The probable oxidoreductase iacF is then involved in the epoxidation of pestalodiol F to pestalodiol F, which is further converted to pestalofone A by the short-chain dehydrogenase/reductase iacG. Iso-A82775C is subsequently generated from pestalofone A by the short-chain dehydrogenase/reductase iacC. Iso-A82775C is further condensed with maldoxin via a Diels-Alder reaction to produce the anticancer natural products chloropestolides A to E. This chain is Short-chain dehydrogenase/reductase iacJ, found in Pestalotiopsis fici (strain W106-1 / CGMCC3.15140).